A 290-amino-acid polypeptide reads, in one-letter code: Thioredoxin-like protein 1 (290 aa).

The 81-residue stretch at 24 to 104 (VDCYADWCGP…PQALKEKVAL (81 aa)) folds into the Thioredoxin domain. The cysteines at positions 31 and 34 are disulfide-linked. In terms of domain architecture, PITH spans 118–290 (SSSAPVKGFA…SKGKLQKVEA (173 aa)).

It is found in the cytoplasm. Its subcellular location is the nucleus. Functionally, has a role in cellular detoxification of alkyl hydroperoxide. The chain is Thioredoxin-like protein 1 (txl1) from Schizosaccharomyces pombe (strain 972 / ATCC 24843) (Fission yeast).